We begin with the raw amino-acid sequence, 778 residues long: Protein SPT2 homolog (778 aa).

3 disordered regions span residues 1–21 (MDFHSVLKMAAAKPGSDGIAK), 50–625 (KKDE…AKPK), and 639–685 (VPKS…DDDD). The tract at residues 1–665 (MDFHSVLKMA…PGHRPAMRPP (665 aa)) is important for interaction with DNA. A coiled-coil region spans residues 44 to 83 (VQAFLRKKDEESRRKETVEKRKKEDLLAKRKELKHDRKAR). Positions 50–78 (KKDEESRRKETVEKRKKEDLLAKRKELKH) are enriched in basic and acidic residues. A compositionally biased stretch (acidic residues) spans 114–135 (EEDQNDNMAAEGEEYMTEEELY). Residues 153–167 (QKVPKPAPGKKPPTP) are compositionally biased toward pro residues. The span at 190–227 (RPVKKEERLRTAEELKELEFLERKAQKADRKDPKRNEQ) shows a compositional bias: basic and acidic residues. The stretch at 193–221 (KKEERLRTAEELKELEFLERKAQKADRKD) forms a coiled coil. A compositionally biased stretch (polar residues) spans 242 to 269 (LKGTHSGNSKSSSTEQNGTIRKSSSDTG). Residues 270-286 (SRTEKSGSVFHTKESKK) show a composition bias toward basic and acidic residues. The span at 312–335 (SSQPSAASNSAFGRPSGSARPSGS) shows a compositional bias: low complexity. 2 stretches are compositionally biased toward gly residues: residues 336 to 357 (SGPGRPLGGSGSSSGKSTGGSA) and 365 to 384 (GGSGSGSGKPMGGSGSGKPI). Positions 385 to 394 (GGLHSSHGSG) are enriched in low complexity. Over residues 395-417 (KPTGGTGSGSGKPTGASGSGSGK) the composition is skewed to gly residues. 2 stretches are compositionally biased toward low complexity: residues 418–493 (PTGS…SGSA) and 506–559 (GSGS…PSSS). The segment covering 588 to 604 (VRPNSTSVPGSARSSLG) has biased composition (polar residues). A compositionally biased stretch (pro residues) spans 662 to 671 (MRPPGPPLPP). The important for interaction with histones stretch occupies residues 666–778 (GPPLPPITSS…QLKAAKKMSR (113 aa)). The stretch at 735-778 (REQQKEEARSLRLGIQEDLEELQREEEELKRKAKQLKAAKKMSR) forms a coiled coil.

It belongs to the SPT2 family. In terms of assembly, interacts with histones. Interacts with a heterotetrameric complex formed by histone H3 and H4, especially when the histone tetramer is not bound to DNA.

It localises to the nucleus. It is found in the nucleolus. Functionally, histone chaperone that stabilizes pre-existing histone tetramers and regulates replication-independent histone exchange on chromatin. Required for normal chromatin refolding in the coding region of transcribed genes, and for the suppression of spurious transcription. Binds DNA and histones and promotes nucleosome assembly (in vitro). Facilitates formation of tetrameric histone complexes containing histone H3 and H4. Modulates RNA polymerase 1-mediated transcription. Binds DNA, with a preference for branched DNA species, such as Y-form DNA and Holliday junction DNA. The polypeptide is Protein SPT2 homolog (spty2d1) (Xenopus tropicalis (Western clawed frog)).